A 103-amino-acid polypeptide reads, in one-letter code: Large ribosomal subunit protein bL21 (103 aa).

It belongs to the bacterial ribosomal protein bL21 family. In terms of assembly, part of the 50S ribosomal subunit. Contacts protein L20.

Its function is as follows. This protein binds to 23S rRNA in the presence of protein L20. The protein is Large ribosomal subunit protein bL21 of Alteromonas mediterranea (strain DSM 17117 / CIP 110805 / LMG 28347 / Deep ecotype).